Here is a 466-residue protein sequence, read N- to C-terminus: Vimentin (466 aa).

The span at 1–13 (MSTRSVSSSSYRR) shows a compositional bias: low complexity. A disordered region spans residues 1-31 (MSTRSVSSSSYRRMFGGPGTASRPSSTRSYV). At Ser2 the chain carries N-acetylserine. Positions 2 to 95 (STRSVSSSSY…FSLADAINTE (94 aa)) are head. At Ser5 the chain carries Phosphoserine. A Phosphoserine; by PKA and PKC; alternate modification is found at Ser7. A glycan (O-linked (GlcNAc) serine; alternate) is linked at Ser7. Ser8 bears the Phosphoserine mark. Ser9 and Ser10 each carry phosphoserine; by PKC. Thr20 carries the phosphothreonine modification. Ser25 carries the post-translational modification Phosphoserine; by PKA and PKC. A Phosphoserine; by PKC modification is found at Ser26. Thr33 is a glycosylation site (O-linked (GlcNAc) threonine). Ser34 carries O-linked (GlcNAc) serine; alternate glycosylation. Ser34 is subject to Phosphoserine; by PKC; alternate. A Phosphoserine; by CaMK2, PKA, PKC and ROCK2 modification is found at Ser39. Residue Ser42 is modified to Phosphoserine; by PKC. The residue at position 49 (Ser49) is a Phosphoserine. Tyr53 is modified (phosphotyrosine). Ser55 is subject to Phosphoserine. Ser56 carries the phosphoserine; by CDK5 and CDK1 modification. Tyr61 is modified (phosphotyrosine). Residue Ser66 is modified to Phosphoserine; by PKA and PKC. Ser72 carries the post-translational modification Phosphoserine; by AURKB and ROCK2. Ser83 bears the Phosphoserine; by CaMK2 mark. Ser87 is subject to Phosphoserine. Residues 96–131 (FKNTRTNEKVELQELNDRFANYIDKVRFLEQQNKIL) form a coil 1A region. Residues 96–131 (FKNTRTNEKVELQELNDRFANYIDKVRFLEQQNKIL) adopt a coiled-coil conformation. The IF rod domain maps to 103 to 411 (EKVELQELND…KLLEGEESRI (309 aa)). Residue Lys104 forms a Glycyl lysine isopeptide (Lys-Gly) (interchain with G-Cter in SUMO2) linkage. Phosphotyrosine is present on Tyr117. Lys120, Lys129, and Lys139 each carry N6-acetyllysine; alternate. N6-succinyllysine; alternate is present on residues Lys120 and Lys129. Glycyl lysine isopeptide (Lys-Gly) (interchain with G-Cter in SUMO2); alternate cross-links involve residues Lys120, Lys129, and Lys139. The linker 1 stretch occupies residues 132–153 (LAELEQLKGQGKSRLGDLYEEE). Residue Ser144 is modified to Phosphoserine. Residues 154-245 (MRELRRQVDQ…KLHDEEIQEL (92 aa)) adopt a coiled-coil conformation. The interval 154–245 (MRELRRQVDQ…KLHDEEIQEL (92 aa)) is coil 1B. Lys168 carries the post-translational modification N6-acetyllysine. Position 188 is an N6-acetyllysine; alternate (Lys188). Lys188 bears the N6-succinyllysine; alternate mark. Ser214 carries the phosphoserine modification. Position 223 is an N6-acetyllysine; alternate (Lys223). Residue Lys223 forms a Glycyl lysine isopeptide (Lys-Gly) (interchain with G-Cter in SUMO2); alternate linkage. Residue Ser226 is modified to Phosphoserine. Lys235 carries the post-translational modification N6-acetyllysine. The interval 246–268 (QAQIQEQHVQIDMDVSKPDLTAA) is linker 12. A Glycyl lysine isopeptide (Lys-Gly) (interchain with G-Cter in SUMO2) cross-link involves residue Lys262. The tract at residues 269-407 (LRDVRQQYES…ATYRKLLEGE (139 aa)) is coil 2. Residue Lys294 is modified to N6-acetyllysine; alternate. At Lys294 the chain carries N6-succinyllysine; alternate. Lys294 participates in a covalent cross-link: Glycyl lysine isopeptide (Lys-Gly) (interchain with G-Cter in SUMO2); alternate. Phosphoserine is present on Ser299. Residues 303-407 (NRNNDALRQA…ATYRKLLEGE (105 aa)) adopt a coiled-coil conformation. Residue Lys313 forms a Glycyl lysine isopeptide (Lys-Gly) (interchain with G-Cter in SUMO2) linkage. The [IL]-x-C-x-x-[DE] motif signature appears at 326–329 (LTCE). Lys373 bears the N6-acetyllysine; alternate mark. Residue Lys373 forms a Glycyl lysine isopeptide (Lys-Gly) (interchain with G-Cter in SUMO2); alternate linkage. Residues 408-466 (ESRISLPLPNFSSLNLRETNLDSLPLVDTHSKRTLLIKTVETRDGQVINETSQHHDDLE) are tail. Phosphoserine is present on residues Ser409, Ser412, Ser419, and Ser420. Phosphothreonine is present on Thr426. Ser430 bears the Phosphoserine mark. Thr436 carries the phosphothreonine modification. Ser438 is subject to Phosphoserine. Lys439 participates in a covalent cross-link: Glycyl lysine isopeptide (Lys-Gly) (interchain with G-Cter in SUMO2). The residue at position 445 (Lys445) is an N6-acetyllysine; alternate. Position 445 is an N6-succinyllysine; alternate (Lys445). Residue Lys445 forms a Glycyl lysine isopeptide (Lys-Gly) (interchain with G-Cter in SUMO2); alternate linkage. Lys445 participates in a covalent cross-link: Glycyl lysine isopeptide (Lys-Gly) (interchain with G-Cter in SUMO1); alternate. Phosphothreonine occurs at positions 446 and 458. Position 459 is a phosphoserine (Ser459).

Belongs to the intermediate filament family. In terms of assembly, homomer assembled from elementary dimers. Identified in complexes that contain VIM, EZR, AHNAK, BFSP1, BFSP2, ANK2, PLEC, PRX and spectrin. Interacts with BCAS3. Interacts with LGSN. Interacts with SYNM. Interacts (via rod region) with PLEC (via CH 1 domain). Interacts with STK33. Interacts with LARP6. Interacts with RAB8B. Interacts with TOR1A; the interaction associates TOR1A with the cytoskeleton. Interacts with TOR1AIP1. Interacts with TOR1AIP1. Interacts with DIAPH1. Interacts with EPPK1; interaction is dependent of higher-order structure of intermediate filament. Interacts with the non-receptor tyrosine kinase SRMS; the interaction leads to phosphorylation of VIM. Interacts with NOD2. Interacts (via head region) with CORO1C. Interacts with HDGF. Interacts with PRKCE (via phorbol-ester/DAG-type 2 domain). Interacts with BFSP2. Interacts with PPL. Interacts with PKP1 and PKP2. Interacts with SCRIB (via PDZ domains); the interaction protects SCRIB from proteasomal degradation and facilitates SCRIB localization to intermediate filaments, the interaction is reduced by cell contact inhibition. Post-translationally, one of the most prominent phosphoproteins in various cells of mesenchymal origin. Phosphorylation is enhanced during cell division, at which time vimentin filaments are significantly reorganized. Phosphorylation by PKN1 inhibits the formation of filaments. Filament disassembly during mitosis is promoted by phosphorylation at Ser-55 as well as by nestin. Phosphorylated at Ser-56 by CDK5 during neutrophil secretion in the cytoplasm. Phosphorylated by STK33. Phosphorylated on tyrosine residues by SRMS. S-nitrosylation is induced by interferon-gamma and oxidatively-modified low-densitity lipoprotein (LDL(ox)) possibly implicating the iNOS-S100A8/9 transnitrosylase complex.

The protein resides in the cytoplasm. The protein localises to the cytoskeleton. It localises to the nucleus matrix. It is found in the cell membrane. In terms of biological role, vimentins are class-III intermediate filaments found in various non-epithelial cells, especially mesenchymal cells. Vimentin is attached to the nucleus, endoplasmic reticulum, and mitochondria, either laterally or terminally. Plays a role in cell directional movement, orientation, cell sheet organization and Golgi complex polarization at the cell migration front. Protects SCRIB from proteasomal degradation and facilitates its localization to intermediate filaments in a cell contact-mediated manner. Involved with LARP6 in the stabilization of type I collagen mRNAs for CO1A1 and CO1A2. The protein is Vimentin (VIM) of Bos taurus (Bovine).